The following is a 172-amino-acid chain: Probable chorismate pyruvate-lyase (172 aa).

Residues Met37, Arg79, Leu117, and Glu158 each coordinate substrate.

The protein belongs to the UbiC family.

The protein resides in the cytoplasm. It carries out the reaction chorismate = 4-hydroxybenzoate + pyruvate. Its pathway is cofactor biosynthesis; ubiquinone biosynthesis. Its function is as follows. Removes the pyruvyl group from chorismate, with concomitant aromatization of the ring, to provide 4-hydroxybenzoate (4HB) for the ubiquinone pathway. This is Probable chorismate pyruvate-lyase from Bartonella quintana (strain Toulouse) (Rochalimaea quintana).